A 1247-amino-acid chain; its full sequence is uncharacterized protein (1247 aa).

Disordered stretches follow at residues 25-141 (KYNN…HSPP), 169-431 (AANN…QQPQ), 472-667 (QQQP…PSSS), 738-770 (NSNS…SEPI), 807-857 (YSNR…QNIE), 869-1087 (GKNF…NNNN), 1099-1122 (STLN…ESQQ), and 1139-1162 (QQQQ…KGDG). A compositionally biased stretch (low complexity) spans 26-125 (YNNSNNYNNN…SNNSINSNSY (100 aa)). Polar residues predominate over residues 126–139 (KVNTPTQNGKSSHS). 3 stretches are compositionally biased toward low complexity: residues 169–178 (AANNGSSNSS), 185–223 (SNSN…NYNS), and 230–341 (NNNN…YSNS). The segment covering 342–356 (KYNQQKSYNNAPHQL) has biased composition (polar residues). Low complexity-rich tracts occupy residues 363–375 (NSYY…NNGN), 385–394 (GSGNSSNSNG), 409–431 (QSQS…QQPQ), and 472–484 (QQQP…QQQQ). A compositionally biased stretch (polar residues) spans 511–522 (GLNNSLNGQTDL). Composition is skewed to low complexity over residues 523 to 544 (NNSN…TNNN), 553 to 628 (YNYN…VGSN), 655 to 667 (TPSS…PSSS), 738 to 759 (NSNS…NNNH), 807 to 855 (YSNR…DSQN), and 871 to 928 (NFNN…ENNN). The segment covering 929 to 942 (GDVFSNGFSTWTPK) has biased composition (polar residues). The segment covering 943–983 (SGSNSLNNSQNNLSNGQNSSNNSQNNLNNSQNSLNSSGNHH) has biased composition (low complexity). Positions 984 to 995 (SNYHGHNNHHHY) are enriched in basic residues. A compositionally biased stretch (low complexity) spans 996–1021 (NNNNNNNNNNNNNNNNNNNNNNNGNG). Over residues 1026-1044 (YYNNKYQQKSPQHQSSNSV) the composition is skewed to polar residues. The segment covering 1047–1060 (IPPPGFSTIAPPPG) has biased composition (pro residues). Positions 1064–1087 (NNNNNNNNNNNNNNNKNNNSNNNN) are enriched in low complexity. Residues 1099-1108 (STLNNSQDDS) show a composition bias toward polar residues. A compositionally biased stretch (low complexity) spans 1110–1122 (QQEQEQQEQESQQ).

This is an uncharacterized protein from Dictyostelium discoideum (Social amoeba).